The primary structure comprises 268 residues: Shikimate kinase (268 aa).

70–80 is a binding site for ATP; the sequence is PSGYGLKSSSA.

Belongs to the GHMP kinase family. Archaeal shikimate kinase subfamily.

It localises to the cytoplasm. It catalyses the reaction shikimate + ATP = 3-phosphoshikimate + ADP + H(+). It functions in the pathway metabolic intermediate biosynthesis; chorismate biosynthesis; chorismate from D-erythrose 4-phosphate and phosphoenolpyruvate: step 5/7. This is Shikimate kinase (aroK) from Thermoplasma acidophilum (strain ATCC 25905 / DSM 1728 / JCM 9062 / NBRC 15155 / AMRC-C165).